A 153-amino-acid polypeptide reads, in one-letter code: Aspartate carbamoyltransferase regulatory chain (153 aa).

4 residues coordinate Zn(2+): Cys-109, Cys-114, Cys-138, and Cys-141.

Belongs to the PyrI family. In terms of assembly, contains catalytic and regulatory chains. Zn(2+) is required as a cofactor.

Its function is as follows. Involved in allosteric regulation of aspartate carbamoyltransferase. This Vibrio vulnificus (strain YJ016) protein is Aspartate carbamoyltransferase regulatory chain.